The chain runs to 394 residues: Elongation factor Tu (394 aa).

In terms of domain architecture, tr-type G spans 10–204; that stretch reads KPHINIGTIG…AVDDNIPTPE (195 aa). Residues 19–26 form a G1 region; sequence GHVDHGKT. Position 19-26 (19-26) interacts with GTP; that stretch reads GHVDHGKT. Threonine 26 is a binding site for Mg(2+). A G2 region spans residues 60 to 64; it reads GITIN. The tract at residues 81–84 is G3; that stretch reads DCPG. Residues 81–85 and 136–139 contribute to the GTP site; these read DCPGH and NKID. The segment at 136–139 is G4; that stretch reads NKID. The interval 174 to 176 is G5; sequence SAL.

This sequence belongs to the TRAFAC class translation factor GTPase superfamily. Classic translation factor GTPase family. EF-Tu/EF-1A subfamily. As to quaternary structure, monomer.

The protein localises to the cytoplasm. It carries out the reaction GTP + H2O = GDP + phosphate + H(+). Its function is as follows. GTP hydrolase that promotes the GTP-dependent binding of aminoacyl-tRNA to the A-site of ribosomes during protein biosynthesis. This chain is Elongation factor Tu, found in Chlamydia caviae (strain ATCC VR-813 / DSM 19441 / 03DC25 / GPIC) (Chlamydophila caviae).